Here is a 400-residue protein sequence, read N- to C-terminus: DNA alpha-glucosyltransferase (400 aa).

Interacts with clamp protein gp45.

The enzyme catalyses Transfers an alpha-D-glucosyl residue from UDP-glucose to a hydroxymethylcytosine residue in DNA.. It functions in the pathway genetic information processing; DNA modification. Functionally, catalyzes the transfer of glucose from uridine diphosphoglucose to 5-hydroxymethyl cytosine of T4 DNA to yield glucosyl 5-hydroxymethyl cytosine (glc-HMC). This DNA process seems to occur immediately after DNA synthesis since the DNA alpha-glucosyltransferase interacts with the clamp protein gp45. The glc-HMC modification protects the phage genome against its own nucleases and the host restriction endonuclease system. The glc-HMC modification also protects against the host CRISPR-Cas9 defense system. The chain is DNA alpha-glucosyltransferase (agt) from Escherichia coli (Bacteriophage T4).